Consider the following 175-residue polypeptide: S-fimbrial protein subunit SfaG (175 aa).

An N-terminal signal peptide occupies residues 1 to 27 (MVKDIIKTVTFSCMLAGSMFVTCHVCA). A disulfide bridge links cysteine 43 with cysteine 83.

Belongs to the fimbrial protein family.

The protein resides in the fimbrium. Functionally, fimbriae (also called pili), polar filaments radiating from the surface of the bacterium to a length of 0.5-1.5 micrometers and numbering 100-300 per cell, enable bacteria to colonize the epithelium of specific host organs. Its function is as follows. A minor fimbrial subunit. This protein is necessary for full expression of S-specific binding. S-fimbrial adhesins enable pathogenic E.coli causing urinary-tract infections or newborn meningitis to attach to glycoproteins terminating with alpha-sialic acid-(2-3)-beta-Gal. The polypeptide is S-fimbrial protein subunit SfaG (sfaG) (Escherichia coli O6:K15:H31 (strain 536 / UPEC)).